Here is a 569-residue protein sequence, read N- to C-terminus: uncharacterized protein (569 aa).

Residues Met1–Ala22 form the signal peptide. The interval Arg498–Gly541 is disordered. The span at Ser505–Ser540 shows a compositional bias: low complexity.

It localises to the secreted. It is found in the cell surface. This is an uncharacterized protein from Schizosaccharomyces pombe (strain 972 / ATCC 24843) (Fission yeast).